Consider the following 930-residue polypeptide: Dual serine/threonine and tyrosine protein kinase (930 aa).

Residues 1–14 (MEGDGVPWGSEPVS) are compositionally biased toward low complexity. Positions 1 to 22 (MEGDGVPWGSEPVSGPGPGGGG) are disordered. Coiled coils occupy residues 190–216 (EEDL…MHHA) and 396–432 (RKKE…KEEL). A Protein kinase domain is found at 653–907 (PKLGQELGRG…PLLGIVQPML (255 aa)). Residues 659-667 (LGRGQYGVV) and Lys-682 contribute to the ATP site. Catalysis depends on Asp-778, which acts as the Proton acceptor.

This sequence belongs to the protein kinase superfamily. Ser/Thr protein kinase family.

The protein localises to the cytoplasm. It is found in the cell membrane. The protein resides in the apical cell membrane. Its subcellular location is the basolateral cell membrane. It localises to the cell junction. It carries out the reaction L-seryl-[protein] + ATP = O-phospho-L-seryl-[protein] + ADP + H(+). The catalysed reaction is L-threonyl-[protein] + ATP = O-phospho-L-threonyl-[protein] + ADP + H(+). The enzyme catalyses L-tyrosyl-[protein] + ATP = O-phospho-L-tyrosyl-[protein] + ADP + H(+). Functionally, acts as a positive regulator of ERK phosphorylation downstream of fibroblast growth factor-receptor activation. Involved in the regulation of both caspase-dependent apoptosis and caspase-independent cell death. In the skin, it plays a predominant role in suppressing caspase-dependent apoptosis in response to UV stress in a range of dermal cell types. The protein is Dual serine/threonine and tyrosine protein kinase (DSTYK) of Pan troglodytes (Chimpanzee).